A 380-amino-acid chain; its full sequence is Cytochrome b (380 aa).

The next 4 membrane-spanning stretches (helical) occupy residues 33-53 (FGSL…FLAM), 77-98 (WLIR…YMHI), 113-133 (WNIG…GYVL), and 178-198 (FFAF…LHLL). Heme b contacts are provided by His-83 and His-97. Heme b is bound by residues His-182 and His-196. A ubiquinone is bound at residue His-201. The next 4 membrane-spanning stretches (helical) occupy residues 226–246 (YKDL…ALFA), 288–308 (LGGV…PILH), 320–340 (LTQF…WIGG), and 347–367 (FIII…VLAP).

The protein belongs to the cytochrome b family. The cytochrome bc1 complex contains 3 respiratory subunits (MT-CYB, CYC1 and UQCRFS1), 2 core proteins (UQCRC1 and UQCRC2) and probably 6 low-molecular weight proteins. The cofactor is heme b.

The protein localises to the mitochondrion inner membrane. Functionally, component of the ubiquinol-cytochrome c reductase complex (complex III or cytochrome b-c1 complex) that is part of the mitochondrial respiratory chain. The b-c1 complex mediates electron transfer from ubiquinol to cytochrome c. Contributes to the generation of a proton gradient across the mitochondrial membrane that is then used for ATP synthesis. This is Cytochrome b (mt-cyb) from Salmo salar (Atlantic salmon).